Consider the following 357-residue polypeptide: Elongation factor Ts (357 aa).

The segment at 82–85 (TDFV) is involved in Mg(2+) ion dislocation from EF-Tu.

It belongs to the EF-Ts family.

It localises to the cytoplasm. In terms of biological role, associates with the EF-Tu.GDP complex and induces the exchange of GDP to GTP. It remains bound to the aminoacyl-tRNA.EF-Tu.GTP complex up to the GTP hydrolysis stage on the ribosome. The chain is Elongation factor Ts from Campylobacter jejuni subsp. jejuni serotype O:2 (strain ATCC 700819 / NCTC 11168).